A 145-amino-acid polypeptide reads, in one-letter code: Deoxyuridine 5'-triphosphate nucleotidohydrolase (145 aa).

Residues 62-64, asparagine 75, 79-81, and lysine 89 each bind substrate; these read RSG and TVD.

The protein belongs to the dUTPase family. The cofactor is Mg(2+).

It catalyses the reaction dUTP + H2O = dUMP + diphosphate + H(+). It participates in pyrimidine metabolism; dUMP biosynthesis; dUMP from dCTP (dUTP route): step 2/2. In terms of biological role, this enzyme is involved in nucleotide metabolism: it produces dUMP, the immediate precursor of thymidine nucleotides and it decreases the intracellular concentration of dUTP so that uracil cannot be incorporated into DNA. The chain is Deoxyuridine 5'-triphosphate nucleotidohydrolase from Helicobacter pylori (strain Shi470).